Reading from the N-terminus, the 410-residue chain is Peptidase T (410 aa).

H79 serves as a coordination point for Zn(2+). D81 is an active-site residue. A Zn(2+)-binding site is contributed by D142. Catalysis depends on E176, which acts as the Proton acceptor. Zn(2+) is bound by residues E177, D199, and H381.

The protein belongs to the peptidase M20B family. It depends on Zn(2+) as a cofactor.

The protein resides in the cytoplasm. It carries out the reaction Release of the N-terminal residue from a tripeptide.. In terms of biological role, cleaves the N-terminal amino acid of tripeptides. In Bacillus velezensis (strain DSM 23117 / BGSC 10A6 / LMG 26770 / FZB42) (Bacillus amyloliquefaciens subsp. plantarum), this protein is Peptidase T.